A 1086-amino-acid polypeptide reads, in one-letter code: Rh5-interacting protein (1086 aa).

The N-terminal stretch at 1-19 is a signal peptide; it reads MFRIFFTLLIIILIKKTSA. N-linked (GlcNAc...) asparagine glycans are attached at residues N103, N144, N228, N303, N334, N480, N498, N506, N526, and N646. EGF-like domains lie at 287–321 and 325–362; these read RCTQ…NNCE and LCTV…NKCY. EGF-like domains follow at residues 636–675, 679–715, 719–753, 818–854, 858–897, 901–938, and 942–979; these read SCSN…KLCE, DCES…GKCV, KCDL…GVCI, YCKD…GECI, SCLI…GKCV, KCVH…GVCL, and PCLK…DSCV. 2 N-linked (GlcNAc...) asparagine glycosylation sites follow: N964 and N1021.

In terms of assembly, component of the PfRH5 adhesion complex composed of 1 copy of CyRPA, RH5 and RIPR; the complex is formed during merozoite invasion of host erythrocytes specifically at the interface between the parasite and host membranes. Within the complex, interacts with CyRPA. CyRPA recruitment of RIPR to RH5-P113-BSG leads to the formation of the PfRH5 adhesion complex which probably in turn releases RH5 from P113 while maintaining the interaction of the PfRH5 adhesion complex with BSG. In terms of processing, proteolytically cleaved into two chains of 125kDa and 65kDa which remain associated. The cleavage occurs at the schizont stage prior to the release of merozoites. Contains disulfide bonds.

The protein resides in the secreted. The protein localises to the cytoplasmic vesicle. It localises to the secretory vesicle. It is found in the microneme lumen. Its subcellular location is the cell membrane. The protein resides in the host cell membrane. Functionally, essential for the invasion of host erythrocytes by blood stage merozoites. As part of the PfRH5 adhesion complex, facilitates the interaction of RH5 and human BSG required for the Ca(2+) release into the erythrocyte. This is Rh5-interacting protein (RIPR) from Plasmodium falciparum (isolate 3D7).